The sequence spans 493 residues: MECQRCPASARNPATVESRKEKFCDECFIKFVSTKQRKQMMKDEYFRNLFKVIYPFEKEGSVSKILLPLSHSDSGSLVMLDIVHDLLLEQTKQHNNRTGFTVDVLTVFTEENVSVIKERMESLINEKMSQLNKISNIFNVHFIDVNEFFNNASEVSTFIIDNENFEIFSKSKSVDDSNILTLKEILGKYCLNNSSRSDLISIIKTQLIKHFAYENGYNAIMWGHSMTKLSEVIISLVVKGKGSQIATFLDSESFDTLNNKPCKYKNLYPMKDLLSVEIESFLQIRNLAQFLINVEETNVKPNCLIARKSLPSLGQQKLVKNMTINEITNKYFQDIQNDYSNIISTVLRTADKLTQPKSSMAKPSQCQICQSKIYTNPSNWLNRITVTSPYPVETTEEKYLFKQWQDSKLGQSHTHYVELLNEIKQGASNSLDVEDGDVKLCYGCLILLNTSIKDKNLVWPKVDTMDITANATNKNKELSQILDQFEINSDGEE.

Residue S489 is modified to Phosphoserine.

Belongs to the CTU2/NCS2 family. In terms of assembly, interacts with NCS6 and URM1. May act by forming a heterodimer with NCS6.

It is found in the cytoplasm. It functions in the pathway tRNA modification; 5-methoxycarbonylmethyl-2-thiouridine-tRNA biosynthesis. In terms of biological role, plays a central role in 2-thiolation of mcm(5)S(2)U at tRNA wobble positions of tRNA(Lys), tRNA(Glu) and tRNA(Gln). May act by forming a heterodimer with NCS6 that ligates sulfur from thiocarboxylated URM1 onto the uridine of tRNAs at wobble position. Prior mcm(5) tRNA modification by the elongator complex is required for 2-thiolation. May also be involved in protein urmylation and in invasive and pseudohyphal growth. Inhibits replication of Brome mosaic virus. This is Cytoplasmic tRNA 2-thiolation protein 2 from Saccharomyces cerevisiae (strain ATCC 204508 / S288c) (Baker's yeast).